A 56-amino-acid polypeptide reads, in one-letter code: Prokaryotic ubiquitin-like protein UBact (56 aa).

Over residues 1-28 (MPQDQQRKKQFDPNPNRDDSQRKTPVDK) the composition is skewed to basic and acidic residues. Positions 1–33 (MPQDQQRKKQFDPNPNRDDSQRKTPVDKEIDDI) are disordered. Deamidated glutamine is present on Gln56. Gln56 is covalently cross-linked (Isoglutamyl lysine isopeptide (Gln-Lys) (interchain with K-? in acceptor proteins)).

The protein belongs to the ubiquitin-like protein UBact family. Post-translationally, may be modified by deamidation of its C-terminal glutamine to glutamate by the adjacently encoded deamidase. This could be a prerequisite to the subsequent conjugation, as shown in the other prokaryotic ubiquitin-like protein Pup.

Its function is as follows. May function as a protein modifier covalently attached to lysine residues of substrate proteins. This may serve to target the modified proteins for degradation by proteasomes. This is Prokaryotic ubiquitin-like protein UBact from Yanofskybacteria sp. (strain GW2011_GWA1_39_13).